A 274-amino-acid chain; its full sequence is Transcription factor Ovo-like 2 (274 aa).

Positions methionine 1–serine 11 are enriched in basic residues. Residues methionine 1–glycine 88 are disordered. Residues serine 18 to aspartate 29 are compositionally biased toward basic and acidic residues. Residues aspartate 50–arginine 74 are compositionally biased toward low complexity. 4 consecutive C2H2-type zinc fingers follow at residues histidine 118–histidine 140, histidine 146–histidine 168, tyrosine 174–histidine 197, and tyrosine 213–histidine 236. Position 268 is a phosphoserine (serine 268).

This sequence belongs to the krueppel C2H2-type zinc-finger protein family. Interacts (via zinc-finger domains) with CEBPA (via bZIP domain); the interaction inhibits the transcription factor activity of CEBPA and is required to repress adipogenesis. As to expression, expressed highly in testis, specifically in spermatocytes. Expressed also in skin and at lower levels in the ovary. Expressed in adipose tissues. Expression is lower than in testis and a relatively higher expression level is detected in the stromal vascular fraction (SVF) than in fat cells themselves.

The protein localises to the nucleus. Its function is as follows. Zinc-finger transcription repressor factor. Plays a critical role in maintaining the identity of epithelial lineages by suppressing epithelial-to mesenchymal transition (EMT) mainly through the repression of ZEB1, an EMT inducer. Positively regulates neuronal differentiation. Suppresses cell cycling and terminal differentiation of keratinocytes by directly repressing MYC and NOTCH1. Important for the correct development of primordial germ cells in embryos. Plays dual functions in thermogenesis and adipogenesis to maintain energy balance. Essential for brown/beige adipose tissue-mediated thermogenesis, is necessary for the development of brown adipocytes. In white adipose tissues, limits adipogenesis by blocking CEBPA binding to its transcriptional targets and inhibiting its transcription factor activity. This is Transcription factor Ovo-like 2 from Mus musculus (Mouse).